The primary structure comprises 337 residues: Alcohol dehydrogenase (337 aa).

Residues C38, H61, C92, C95, C98, C106, and C148 each coordinate Zn(2+). NAD(+) is bound by residues 172-177 (GIGGLG), D195, K200, 260-262 (VGL), and R331.

Belongs to the zinc-containing alcohol dehydrogenase family. It depends on Zn(2+) as a cofactor.

It catalyses the reaction a primary alcohol + NAD(+) = an aldehyde + NADH + H(+). The catalysed reaction is a secondary alcohol + NAD(+) = a ketone + NADH + H(+). Its activity is regulated as follows. Substrate inhibition is not observed with any alcohols, and the enzyme-NADH dissociation is not considered to be a rate-limiting step. NAD(+)-dependent alcohol dehydrogenase. The sequence is that of Alcohol dehydrogenase (adhT) from Geobacillus stearothermophilus (Bacillus stearothermophilus).